The sequence spans 414 residues: Glyceraldehyde-3-phosphate dehydrogenase, chloroplastic (414 aa).

The transit peptide at 1 to 76 (MAFVAPVATV…GIVAATFGPT (76 aa)) directs the protein to the chloroplast. Residues 88–89 (RI), Asp112, and Arg156 contribute to the NADP(+) site. D-glyceraldehyde 3-phosphate is bound by residues 230-232 (SCT), Thr261, Arg276, 289-290 (TG), and Arg312. Residue Cys231 is the Nucleophile of the active site. Asn394 contacts NADP(+).

The protein belongs to the glyceraldehyde-3-phosphate dehydrogenase family. In terms of assembly, homotetramer.

The protein localises to the plastid. Its subcellular location is the chloroplast. The enzyme catalyses D-glyceraldehyde 3-phosphate + phosphate + NADP(+) = (2R)-3-phospho-glyceroyl phosphate + NADPH + H(+). It participates in carbohydrate biosynthesis; Calvin cycle. The sequence is that of Glyceraldehyde-3-phosphate dehydrogenase, chloroplastic (GAPA) from Chondrus crispus (Carrageen Irish moss).